Reading from the N-terminus, the 681-residue chain is Potassium-transporting ATPase ATP-binding subunit (681 aa).

4 helical membrane-spanning segments follow: residues 30 to 50 (LLVY…FFGI), 59 to 79 (LAIA…EAIA), 216 to 236 (ILLV…LPFT), and 255 to 275 (IALL…SIGI). The active-site 4-aspartylphosphate intermediate is Asp-306. Residues Asp-343, Glu-347, 376–383 (FTATTRMS), and Lys-394 contribute to the ATP site. Residues Asp-517 and Asp-521 each coordinate Mg(2+). 3 helical membrane-spanning segments follow: residues 587-607 (FAII…LNLM), 615-635 (AILS…PLSL), and 661-681 (LIAP…LGIV).

Belongs to the cation transport ATPase (P-type) (TC 3.A.3) family. Type IA subfamily. The system is composed of three essential subunits: KdpA, KdpB and KdpC.

The protein resides in the cell membrane. It carries out the reaction K(+)(out) + ATP + H2O = K(+)(in) + ADP + phosphate + H(+). Its function is as follows. Part of the high-affinity ATP-driven potassium transport (or Kdp) system, which catalyzes the hydrolysis of ATP coupled with the electrogenic transport of potassium into the cytoplasm. This subunit is responsible for energy coupling to the transport system and for the release of the potassium ions to the cytoplasm. This chain is Potassium-transporting ATPase ATP-binding subunit, found in Listeria monocytogenes serovar 1/2a (strain ATCC BAA-679 / EGD-e).